Consider the following 119-residue polypeptide: Protein TusC (119 aa).

The protein belongs to the DsrF/TusC family. Heterohexamer, formed by a dimer of trimers. The hexameric TusBCD complex contains 2 copies each of TusB, TusC and TusD. The TusBCD complex interacts with TusE.

It is found in the cytoplasm. Its function is as follows. Part of a sulfur-relay system required for 2-thiolation of 5-methylaminomethyl-2-thiouridine (mnm(5)s(2)U) at tRNA wobble positions. This Buchnera aphidicola subsp. Baizongia pistaciae (strain Bp) protein is Protein TusC.